Consider the following 525-residue polypeptide: Glucans biosynthesis protein G (525 aa).

The signal sequence occupies residues 1–35; the sequence is MIFRSVSNTDFRARVRTLLLAGSTALAFVAAPVWA.

It belongs to the OpgD/OpgG family.

Its subcellular location is the periplasm. Its pathway is glycan metabolism; osmoregulated periplasmic glucan (OPG) biosynthesis. Its function is as follows. Involved in the biosynthesis of osmoregulated periplasmic glucans (OPGs). The sequence is that of Glucans biosynthesis protein G from Pseudomonas paraeruginosa (strain DSM 24068 / PA7) (Pseudomonas aeruginosa (strain PA7)).